Here is an 81-residue protein sequence, read N- to C-terminus: Toxin TdNa10 (81 aa).

The first 20 residues, 1–20 (MWTFAIVLAFLLIGLDEGEA), serve as a signal peptide directing secretion. The 61-residue stretch at 21-81 (LDGYPLSKNN…KMYPGELPCH (61 aa)) folds into the LCN-type CS-alpha/beta domain. 4 disulfides stabilise this stretch: C32-C80, C36-C57, C42-C62, and C46-C64.

It belongs to the long (4 C-C) scorpion toxin superfamily. Sodium channel inhibitor family. Beta subfamily. In terms of tissue distribution, expressed by the venom gland.

The protein resides in the secreted. Its function is as follows. Alpha toxins bind voltage-independently at site-3 of sodium channels (Nav) and inhibit the inactivation of the activated channels, thereby blocking neuronal transmission. This toxin binds, in vitro, to sodium channels and inhibits the inactivation of the activated channels. Seems not toxic to mice, crickets and sweet-water shrimps. The chain is Toxin TdNa10 from Tityus discrepans (Venezuelan scorpion).